Consider the following 328-residue polypeptide: Malate dehydrogenase (328 aa).

12–18 (GAAGQIG) is a binding site for NAD(+). Residues Arg-92 and Arg-98 each coordinate substrate. NAD(+) contacts are provided by residues Asn-105, Gln-112, and 129–131 (TGN). Substrate is bound by residues Asn-131 and Arg-162. The active-site Proton acceptor is His-187.

This sequence belongs to the LDH/MDH superfamily. MDH type 2 family.

The enzyme catalyses (S)-malate + NAD(+) = oxaloacetate + NADH + H(+). Functionally, catalyzes the reversible oxidation of malate to oxaloacetate. This Nocardioides sp. (strain ATCC BAA-499 / JS614) protein is Malate dehydrogenase.